We begin with the raw amino-acid sequence, 612 residues long: Dihydroxy-acid dehydratase (612 aa).

Asp-81 contributes to the Mg(2+) binding site. Cys-122 contacts [2Fe-2S] cluster. Asp-123 and Lys-124 together coordinate Mg(2+). At Lys-124 the chain carries N6-carboxylysine. Cys-193 provides a ligand contact to [2Fe-2S] cluster. Glu-489 contacts Mg(2+). Ser-515 acts as the Proton acceptor in catalysis.

This sequence belongs to the IlvD/Edd family. As to quaternary structure, homodimer. [2Fe-2S] cluster is required as a cofactor. Mg(2+) serves as cofactor.

It carries out the reaction (2R)-2,3-dihydroxy-3-methylbutanoate = 3-methyl-2-oxobutanoate + H2O. The enzyme catalyses (2R,3R)-2,3-dihydroxy-3-methylpentanoate = (S)-3-methyl-2-oxopentanoate + H2O. Its pathway is amino-acid biosynthesis; L-isoleucine biosynthesis; L-isoleucine from 2-oxobutanoate: step 3/4. It functions in the pathway amino-acid biosynthesis; L-valine biosynthesis; L-valine from pyruvate: step 3/4. Functionally, functions in the biosynthesis of branched-chain amino acids. Catalyzes the dehydration of (2R,3R)-2,3-dihydroxy-3-methylpentanoate (2,3-dihydroxy-3-methylvalerate) into 2-oxo-3-methylpentanoate (2-oxo-3-methylvalerate) and of (2R)-2,3-dihydroxy-3-methylbutanoate (2,3-dihydroxyisovalerate) into 2-oxo-3-methylbutanoate (2-oxoisovalerate), the penultimate precursor to L-isoleucine and L-valine, respectively. The chain is Dihydroxy-acid dehydratase from Ectopseudomonas mendocina (strain ymp) (Pseudomonas mendocina).